The sequence spans 426 residues: 3-phosphoshikimate 1-carboxyvinyltransferase (426 aa).

3-phosphoshikimate-binding residues include Lys-23, Ser-24, and Arg-28. Lys-23 contributes to the phosphoenolpyruvate binding site. Gly-96 and Arg-124 together coordinate phosphoenolpyruvate. Positions 170, 171, 172, 198, 314, and 341 each coordinate 3-phosphoshikimate. Gln-172 is a phosphoenolpyruvate binding site. Catalysis depends on Asp-314, which acts as the Proton acceptor. The phosphoenolpyruvate site is built by Arg-345, Arg-386, and Lys-411.

This sequence belongs to the EPSP synthase family. As to quaternary structure, monomer.

The protein localises to the cytoplasm. The catalysed reaction is 3-phosphoshikimate + phosphoenolpyruvate = 5-O-(1-carboxyvinyl)-3-phosphoshikimate + phosphate. It functions in the pathway metabolic intermediate biosynthesis; chorismate biosynthesis; chorismate from D-erythrose 4-phosphate and phosphoenolpyruvate: step 6/7. Catalyzes the transfer of the enolpyruvyl moiety of phosphoenolpyruvate (PEP) to the 5-hydroxyl of shikimate-3-phosphate (S3P) to produce enolpyruvyl shikimate-3-phosphate and inorganic phosphate. The chain is 3-phosphoshikimate 1-carboxyvinyltransferase from Nostoc punctiforme (strain ATCC 29133 / PCC 73102).